Consider the following 218-residue polypeptide: MKKHDGIIVLLSGGMDSATLLWLAKREFKKVYAISFDYGQRHKVELKYAKELAKLAEVEDHFIVQVPFYTSLKGSALIDESVEVPKGEYPENEPPVTTVPMRNLIFLSIASAFADNLEVNYIGIGVHALDTPYPDCRPEFITAAEAAINAGSTFVAKKKERMHVYAPFLGMSKRDIALLGKELGVPFEKTYSCYMGTEPPCGECPTCIQREEALRGIL.

11–21 is an ATP binding site; sequence LSGGMDSATLL. Positions 193, 201, 204, and 207 each coordinate Zn(2+).

It belongs to the QueC family. Zn(2+) is required as a cofactor.

The catalysed reaction is 7-carboxy-7-deazaguanine + NH4(+) + ATP = 7-cyano-7-deazaguanine + ADP + phosphate + H2O + H(+). Its pathway is purine metabolism; 7-cyano-7-deazaguanine biosynthesis. Functionally, catalyzes the ATP-dependent conversion of 7-carboxy-7-deazaguanine (CDG) to 7-cyano-7-deazaguanine (preQ(0)). In Aquifex aeolicus (strain VF5), this protein is 7-cyano-7-deazaguanine synthase.